The chain runs to 310 residues: MFKFQKEQEIVNIAGVKIGGQPGELPTVLAGTIFYDKHEIVKDVARGLFDRDAAEKLINLQESSAEETGNPYIIHIFGTTPESITRYIDFVAEISEAPFLIDSPEGTVRSHAAEYVSEIGLADKAIYNSINMSINASEIEALALSDIDSSIILGFNAMDSSLQGRMEMLENGAGLLEEGLLSIADRCGIVNKLIDPSITPMGNGAGVALKMTITAKAKWGHPTGSGIHNAPSAWNWLNKKKEKDPVLYKICDVGSTCLQQAAAGDFILYGPIEYAPYIFPMAAMSDIMISEAVADLGIEPASRHPLNLLV.

Belongs to the MtrH family. As to quaternary structure, may be part of a complex composed of 3 subunits; MtxA, MtxH and MtxX.

The chain is Putative methyltransferase mtx subunit H (mtxH) from Methanosarcina barkeri (strain Fusaro / DSM 804).